Here is a 535-residue protein sequence, read N- to C-terminus: Probable inorganic phosphate transporter 1-7 (535 aa).

Residues Met-1–Ala-24 lie on the Cytoplasmic side of the membrane. The helical transmembrane segment at Ile-25–Val-45 threads the bilayer. Residues Thr-46–Ser-70 lie on the Extracellular side of the membrane. The chain crosses the membrane as a helical span at residues Ala-71 to Leu-91. Residues Gly-92–Lys-99 are Cytoplasmic-facing. A helical membrane pass occupies residues Val-100–Gly-120. The Extracellular segment spans residues Ser-121–Cys-131. A helical membrane pass occupies residues Phe-132 to Met-152. At Ser-153–Arg-161 the chain is on the cytoplasmic side. Residues Gly-162–Phe-182 form a helical membrane-spanning segment. The Extracellular segment spans residues Ala-183 to Ala-211. Residues Asp-212–Ser-232 traverse the membrane as a helical segment. The Cytoplasmic portion of the chain corresponds to Arg-233–Arg-289. Residues His-290–Ser-310 form a helical membrane-spanning segment. Over Gln-311–Thr-345 the chain is Extracellular. A helical transmembrane segment spans residues Leu-346–Ile-366. Topologically, residues Gly-367–Arg-368 are cytoplasmic. Residues Phe-369 to Pro-389 form a helical membrane-spanning segment. At Tyr-390 to Arg-399 the chain is on the extracellular side. A helical membrane pass occupies residues Ile-400–Thr-420. Topologically, residues Thr-421 to His-438 are cytoplasmic. Residues Gly-439 to Leu-459 traverse the membrane as a helical segment. Residues Ala-460–Asn-480 are Extracellular-facing. A helical membrane pass occupies residues Ser-481–Glu-501. Topologically, residues Ser-502–Ala-535 are cytoplasmic. Residues Ser-506–Ala-535 are disordered. The span at Glu-519–Ala-535 shows a compositional bias: low complexity. The residue at position 520 (Ser-520) is a Phosphoserine.

Belongs to the major facilitator superfamily. Phosphate:H(+) symporter (TC 2.A.1.9) family. In terms of tissue distribution, mature pollen.

It is found in the membrane. High-affinity transporter for external inorganic phosphate. The chain is Probable inorganic phosphate transporter 1-7 (PHT1-7) from Arabidopsis thaliana (Mouse-ear cress).